Reading from the N-terminus, the 468-residue chain is Acetyl-CoA decarbonylase/synthase complex subunit gamma 1 (468 aa).

Residues 1 to 61 (MKINSPLEAY…YAKKLAELDR (61 aa)) enclose the 4Fe-4S domain. Residues cysteine 18, cysteine 21, cysteine 26, and cysteine 43 each coordinate [4Fe-4S] cluster.

Heterodimer of delta and gamma chains. The ACDS complex is made up of alpha, epsilon, beta, gamma and delta chains with a probable stoichiometry of (alpha(2)epsilon(2))(4)-beta(8)-(gamma(1)delta(1))(8). Requires corrinoid as cofactor. It depends on [4Fe-4S] cluster as a cofactor.

It carries out the reaction 5,6,7,8-tetrahydrosarcinapterin + methyl-Co(III)-[corrinoid Fe-S protein] = 5-methyltetrahydrosarcinapterin + Co(I)-[corrinoid Fe-S protein] + H(+). Its pathway is one-carbon metabolism; methanogenesis from acetate. Functionally, part of a complex that catalyzes the reversible cleavage of acetyl-CoA, allowing growth on acetate as sole source of carbon and energy. The sequence is that of Acetyl-CoA decarbonylase/synthase complex subunit gamma 1 from Methanosarcina thermophila.